A 303-amino-acid chain; its full sequence is uncharacterized protein (303 aa).

Disordered stretches follow at residues 1-89 (MTSP…NVRS) and 132-159 (SELP…STPR). Residues 61-89 (RASQSGYRPSDPLTTTRQSNPAPGANVRS) are compositionally biased toward polar residues. 2 helical membrane-spanning segments follow: residues 205–225 (LLLS…LYLL) and 264–284 (VLVG…AAFV).

The protein to M.tuberculosis Rv0007.

It localises to the cell membrane. This is an uncharacterized protein from Mycobacterium leprae (strain TN).